Consider the following 303-residue polypeptide: MPSKAKVAIVGSGNISTDLLYKLLRSEWLEPRWMVGIDPESDGLARAAKLGLETTHEGVDWLLAQPDKPDLVFEATSAYVHRDAAPKYAEAGIRAIDLTPAAVGPAVIPPANLREHLDAPNVNMITCGGQATIPIVYAVSRIVEVPYAEIVASVASVSAGPGTRANIDEFTKTTARGVQTIGGAARGKAIIILNPADPPMIMRDTIFCAIPTDADREAIAASIHDVVKEVQTYVPGYRLLNEPQFDEPSINSGGQALVTTFVEVEGAGDYLPPYAGNLDIMTAAATKVGEEIAKETLVVGGAR.

12 to 15 (SGNI) provides a ligand contact to NAD(+). Cysteine 127 (acyl-thioester intermediate) is an active-site residue. NAD(+) is bound by residues 158-166 (SAGPGTRAN) and asparagine 277.

The protein belongs to the acetaldehyde dehydrogenase family. As to quaternary structure, monomer. Forms a heterotetramer composed of two aldolase (HsaF) and two dehydrogenase (HsaG) subunits.

It catalyses the reaction propanal + NAD(+) + CoA = propanoyl-CoA + NADH + H(+). It carries out the reaction acetaldehyde + NAD(+) + CoA = acetyl-CoA + NADH + H(+). Involved in cholesterol degradation. Catalyzes the conversion of propanal to propanoyl-CoA, using NAD(+) and coenzyme A. The protein is Propanal dehydrogenase (CoA-propanoylating) of Mycobacterium bovis (strain ATCC BAA-935 / AF2122/97).